The chain runs to 554 residues: CTP synthase (554 aa).

The amidoligase domain stretch occupies residues 1–265 (MTPLIFVTGG…DELVIEQFKL (265 aa)). Ser-13 contacts CTP. Ser-13 is a binding site for UTP. Residues 14-19 (SLGKGI) and Asp-71 each bind ATP. Asp-71 and Glu-139 together coordinate Mg(2+). Residues 146-148 (DIE), 186-191 (KTKPTQ), and Lys-222 each bind CTP. UTP-binding positions include 186–191 (KTKPTQ) and Lys-222. The region spanning 292–545 (NIAVVGKYVD…VRAAREKKAG (254 aa)) is the Glutamine amidotransferase type-1 domain. Gly-353 is an L-glutamine binding site. The Nucleophile; for glutamine hydrolysis role is filled by Cys-380. L-glutamine is bound by residues 381 to 384 (YGMQ), Glu-404, and Arg-471. Active-site residues include His-518 and Glu-520.

This sequence belongs to the CTP synthase family. As to quaternary structure, homotetramer.

It carries out the reaction UTP + L-glutamine + ATP + H2O = CTP + L-glutamate + ADP + phosphate + 2 H(+). The enzyme catalyses L-glutamine + H2O = L-glutamate + NH4(+). It catalyses the reaction UTP + NH4(+) + ATP = CTP + ADP + phosphate + 2 H(+). It functions in the pathway pyrimidine metabolism; CTP biosynthesis via de novo pathway; CTP from UDP: step 2/2. With respect to regulation, allosterically activated by GTP, when glutamine is the substrate; GTP has no effect on the reaction when ammonia is the substrate. The allosteric effector GTP functions by stabilizing the protein conformation that binds the tetrahedral intermediate(s) formed during glutamine hydrolysis. Inhibited by the product CTP, via allosteric rather than competitive inhibition. In terms of biological role, catalyzes the ATP-dependent amination of UTP to CTP with either L-glutamine or ammonia as the source of nitrogen. Regulates intracellular CTP levels through interactions with the four ribonucleotide triphosphates. This is CTP synthase from Xanthomonas euvesicatoria pv. vesicatoria (strain 85-10) (Xanthomonas campestris pv. vesicatoria).